Here is a 714-residue protein sequence, read N- to C-terminus: Fatty acid oxidation complex subunit alpha (714 aa).

The interval 1–190 (MEMASVFTLN…KLGLVDDVVP (190 aa)) is enoyl-CoA hydratase. The interval 306 to 714 (APLNSVGILG…FWKTTATDLQ (409 aa)) is 3-hydroxyacyl-CoA dehydrogenase.

It in the N-terminal section; belongs to the enoyl-CoA hydratase/isomerase family. The protein in the central section; belongs to the 3-hydroxyacyl-CoA dehydrogenase family. Heterotetramer of two alpha chains (FadJ) and two beta chains (FadI).

The protein resides in the cytoplasm. It catalyses the reaction a (3S)-3-hydroxyacyl-CoA = a (2E)-enoyl-CoA + H2O. It carries out the reaction a 4-saturated-(3S)-3-hydroxyacyl-CoA = a (3E)-enoyl-CoA + H2O. The enzyme catalyses a (3S)-3-hydroxyacyl-CoA + NAD(+) = a 3-oxoacyl-CoA + NADH + H(+). The catalysed reaction is (3S)-3-hydroxybutanoyl-CoA = (3R)-3-hydroxybutanoyl-CoA. Its pathway is lipid metabolism; fatty acid beta-oxidation. Functionally, catalyzes the formation of a hydroxyacyl-CoA by addition of water on enoyl-CoA. Also exhibits 3-hydroxyacyl-CoA epimerase and 3-hydroxyacyl-CoA dehydrogenase activities. The protein is Fatty acid oxidation complex subunit alpha of Escherichia coli (strain SE11).